Here is a 257-residue protein sequence, read N- to C-terminus: Expansin-A10 (257 aa).

Residues 1–18 form the signal peptide; sequence MAPCLLLVLFLLPALATG. An Expansin-like EG45 domain is found at 50-163; sequence GGACGFGDLG…RRVNCLRDGG (114 aa). An Expansin-like CBD domain is found at 173–252; the sequence is FFLTVLISNV…EWDFGKTYTG (80 aa).

This sequence belongs to the expansin family. Expansin A subfamily. Expressed in panicles and flowers.

It localises to the secreted. The protein resides in the cell wall. Its subcellular location is the membrane. May cause loosening and extension of plant cell walls by disrupting non-covalent bonding between cellulose microfibrils and matrix glucans. No enzymatic activity has been found. May be required for rapid internodal elongation in deepwater rice during submergence. The sequence is that of Expansin-A10 (EXPA10) from Oryza sativa subsp. japonica (Rice).